Here is a 126-residue protein sequence, read N- to C-terminus: MPEPAKSAPAPKKGSKKAVTKTPKKDGKKRRKSRKESYAIYVYKVMKQVHPDTGISSKAMGIMNSFVNDIFERIAGEASRLAHYNKRSTITSREIQTAVRLLLPGELAKHAVSEGTKAVTKYTSAK.

Residues 1–12 show a composition bias toward low complexity; that stretch reads MPEPAKSAPAPK. The interval 1–35 is disordered; that stretch reads MPEPAKSAPAPKKGSKKAVTKTPKKDGKKRRKSRK. 2 positions are modified to N6-acetyllysine: K6 and K13. The residue at position 15 (S15) is a Phosphoserine. N6-acetyllysine is present on residues K16 and K21. The O-linked (GlcNAc) serine glycan is linked to S113. K121 participates in a covalent cross-link: Glycyl lysine isopeptide (Lys-Gly) (interchain with G-Cter in ubiquitin).

This sequence belongs to the histone H2B family. As to quaternary structure, the nucleosome is a histone octamer containing two molecules each of H2A, H2B, H3 and H4 assembled in one H3-H4 heterotetramer and two H2A-H2B heterodimers. The octamer wraps approximately 147 bp of DNA. In terms of processing, monoubiquitination of Lys-121 by BRE1 gives a specific tag for epigenetic transcriptional activation and is also prerequisite for histone H3 'Lys-4' and 'Lys-79' methylation. Post-translationally, phosphorylated on Ser-15 during developmentally programmed apoptosis; which may facilitate apoptotic chromatin condensation. GlcNAcylation at Ser-113 promotes monoubiquitination of Lys-121. It fluctuates in response to extracellular glucose, and associates with transcribed genes.

Its subcellular location is the nucleus. The protein localises to the chromosome. Functionally, core component of nucleosome. Nucleosomes wrap and compact DNA into chromatin, limiting DNA accessibility to the cellular machineries which require DNA as a template. Histones thereby play a central role in transcription regulation, DNA repair, DNA replication and chromosomal stability. DNA accessibility is regulated via a complex set of post-translational modifications of histones, also called histone code, and nucleosome remodeling. This is Histone H2B 1.2 from Xenopus laevis (African clawed frog).